A 505-amino-acid chain; its full sequence is Peroxisome proliferator-activated receptor gamma (505 aa).

The O-linked (GlcNAc) threonine glycan is linked to threonine 84. Phosphoserine; by MAPK is present on serine 112. A DNA-binding region (nuclear receptor) is located at residues 136-210 (AIECRVCGDK…VGMSHNAIRF (75 aa)). 2 consecutive NR C4-type zinc fingers follow at residues 139-159 (CRVCGDKASGFHYGVHACEGC) and 176-198 (CDLNCRIHKKSRNKCQYCRFQKC). Positions 205–280 (HNAIRFGRMP…DKSPFVIYDM (76 aa)) are interaction with FAM120B. The NR LBD domain maps to 238–503 (DLRALAKHLY…HPLLQEIYKD (266 aa)). Residue lysine 252 forms a Glycyl lysine isopeptide (Lys-Gly) (interchain with G-Cter in ubiquitin) linkage. A 9aaTAD motif is present at residues 495–503 (PLLQEIYKD).

This sequence belongs to the nuclear hormone receptor family. NR1 subfamily. As to quaternary structure, interacts with FOXO1 (acetylated form). Heterodimer with other nuclear receptors, such as RXRA. The heterodimer with the retinoic acid receptor RXRA is called adipocyte-specific transcription factor ARF6. Interacts with NCOA6 coactivator, leading to a strong increase in transcription of target genes. Interacts with coactivator PPARBP, leading to a mild increase in transcription of target genes. Interacts with NOCA7 in a ligand-inducible manner. Interacts with NCOA1 and NCOA2 LXXLL motifs. Interacts with ASXL1, ASXL2, DNTTIP2, FAM120B, MAP2K1/MEK1, NR0B2, PDPK1, PRDM16, PRMT2 and TGFB1I1. Interacts (when activated by agonist) with PPP5C. Interacts with HELZ2 and THRAP3; the interaction stimulates the transcriptional activity of PPARG. Interacts with PER2, the interaction is ligand dependent and blocks PPARG recruitment to target promoters. Interacts with NOCT. Interacts with ACTN4. Interacts (when in the liganded conformation) with GPS2. Interacts with CRY1 and CRY2 in a ligand-dependent manner. In the absence of hormonal ligand, interacts with TACC1. In macrophages, interacts with PAQR3 and STUB1; the interactions promote PPARG poylubiquitination and STUB1-mediated degradation. Post-translationally, O-GlcNAcylation at Thr-84 reduces transcriptional activity in adipocytes. Phosphorylated at basal conditions and dephosphorylated when treated with the ligand. May be dephosphorylated by PPP5C. The phosphorylated form may be inactive and dephosphorylation induces adipogenic activity. In terms of processing, ubiquitinated by E3 ubiquitin-protein ligase complex containing FBXO9; leading to proteasomal degradation. Ubiquitinated at Lys-252 by TRIM55 leading to proteasomal degradation. Ubiquitinated by E3 ubiquitin-protein ligase STUB1/CHIP; leading to proteasomal degradation. In terms of tissue distribution, highest expression in adipose tissue. Lower in liver, heart, kidney, stomach, duodenum and colon.

Its subcellular location is the nucleus. The protein localises to the cytoplasm. With respect to regulation, PDPK1 activates its transcriptional activity independently of its kinase activity. In terms of biological role, nuclear receptor that binds peroxisome proliferators such as hypolipidemic drugs and fatty acids. Once activated by a ligand, the nuclear receptor binds to DNA specific PPAR response elements (PPRE) and modulates the transcription of its target genes, such as acyl-CoA oxidase. It therefore controls the peroxisomal beta-oxidation pathway of fatty acids. Key regulator of adipocyte differentiation and glucose homeostasis. ARF6 acts as a key regulator of the tissue-specific adipocyte P2 (aP2) enhancer. Acts as a critical regulator of gut homeostasis by suppressing NF-kappa-B-mediated pro-inflammatory responses. Plays a role in the regulation of cardiovascular circadian rhythms by regulating the transcription of BMAL1 in the blood vessels. The polypeptide is Peroxisome proliferator-activated receptor gamma (PPARG) (Macaca mulatta (Rhesus macaque)).